The primary structure comprises 595 residues: Phytoene desaturase (595 aa).

A signal peptide spans 1–23 (MAETQRPRSAIIVGAGAGGIAVA). A helical membrane pass occupies residues 574-594 (SQRAFPLLVALMGVLYFLLFV).

It belongs to the carotenoid/retinoid oxidoreductase family. It depends on NAD(+) as a cofactor.

The protein localises to the membrane. The enzyme catalyses 15-cis-phytoene + A = all-trans-phytofluene + AH2. It catalyses the reaction all-trans-phytofluene + A = all-trans-zeta-carotene + AH2. It carries out the reaction all-trans-zeta-carotene + A = all-trans-neurosporene + AH2. The catalysed reaction is all-trans-neurosporene + A = all-trans-lycopene + AH2. The enzyme catalyses all-trans-lycopene + A = all-trans-3,4-didehydrolycopene + AH2. Its pathway is carotenoid biosynthesis; lycopene biosynthesis. In terms of biological role, phytoene desaturase involved in the carotenoid biosynthesis pathway. Converts phytoene into 3,4-didehydrolycopene via the intermediates phytofluene, zeta-carotene, neurosporene and lycopene, by introducing up to five double bonds into phytoene. Is also able to desaturate 1-hydroxyneurosporene into 1-hydroxylycopene and 1-hydroxylycopene into 1-hydroxy-3,4-didehydrolycopene. Gamma-carotene and 1,19-dihydroxylycopene are not accepted as substrates. Neurosporaxanthin is synthesized from geranyl-geranyl pyrophosphate (GGPP) through several enzymatic activities. Phytoene synthase activity performed by the bifunctional enzyme al-2 first produces phytoene from geranyl-geranyl pyrophosphate (GGPP). The phytoene dehydrogenase al-1 then introduces 5 desaturations to lead to 3,4-didehydrolycopene via the intermediates phytofluene, zeta-carotene, neurosporene and lycopene. Al-2 cyclase activity then converts 3,4-didehydrolycopene into torulene. Al-2 can also convet lycopene into gamma-carotene which in turn is converted to beta-carotene by an additional al-2 cyclization reaction. Torulene is the substrate of the dioxidase cao-2 that breaks the molecule, removing five carbon atoms to yield beta-apo-4'-carotenal, whereas the aldehyde dehydrogenase ylo-1 mediates the last step by converting beta-apo-4'-carotenal into neurosporaxanthin. This Neurospora crassa (strain ATCC 24698 / 74-OR23-1A / CBS 708.71 / DSM 1257 / FGSC 987) protein is Phytoene desaturase.